A 238-amino-acid polypeptide reads, in one-letter code: Probable RNA/DNA demethylase ALKBH6 (238 aa).

Residues 96-227 (PANHVLVNQY…RVSLTIRRVP (132 aa)) form the Fe2OG dioxygenase domain. The 2-oxoglutarate site is built by Asn103 and Tyr105. Fe cation contacts are provided by His114 and Asp116. Residues 138–161 (YEPRRPEDDDPTEQPRPPPRPTTS) form a disordered region. His182 serves as a coordination point for Fe cation. Positions 218 and 220 each coordinate 2-oxoglutarate.

It belongs to the alkB family. Interacts with VCPKMT. Fe(2+) serves as cofactor. As to expression, widely expressed, with highest expression in testis and pancreas.

The protein resides in the cytoplasm. It is found in the nucleus. In terms of biological role, probable Fe(2+)/2-oxoglutarate-dependent dioxygenase involved in oxidative demethylation of nucleic acids. Binds nucleic acids with a preference for ssDNA or ssRNA to other types of DNAs. May play a role in nucleic acid damage repair. The chain is Probable RNA/DNA demethylase ALKBH6 from Homo sapiens (Human).